A 28-amino-acid polypeptide reads, in one-letter code: Phospholipase A2 3 (28 aa).

This sequence belongs to the phospholipase A2 family. Group I subfamily. It depends on Ca(2+) as a cofactor. In terms of tissue distribution, expressed by the venom gland.

It is found in the secreted. It carries out the reaction a 1,2-diacyl-sn-glycero-3-phosphocholine + H2O = a 1-acyl-sn-glycero-3-phosphocholine + a fatty acid + H(+). Snake venom phospholipase A2 (PLA2) that inhibits neuromuscular transmission by blocking acetylcholine release from the nerve termini. PLA2 catalyzes the calcium-dependent hydrolysis of the 2-acyl groups in 3-sn-phosphoglycerides. This Micrurus nigrocinctus (Central American coral snake) protein is Phospholipase A2 3.